Here is a 457-residue protein sequence, read N- to C-terminus: MEKVQEQPAQTLSETAEQPAERVVEQPQDSAATAAPPGDSKEAETEKPAEVAPKEDSKEAPAPPPAATTAATADDANSDIIEEVKDKAGANTQVADPKPQEPADTRPSYLVNNAALSQFFDRLAPIVEKAGHNEMWGVPLKDAQDAPTVNIMIKFLRANEGNVKLAEEQLVKALEWRKKMNPLALAESAAFPSSKFKGLGYITTYRDPTTEKNVVFTWNIYGSVKNVDLTFGNLEEFIKWRVALMELAIRELRLESATSVMDYNGEDPYQMIQVHDYQNVSFIRMNPNIRAASRETIEVFSTAYPELLKEKYFVNLPVVMGWVFTALKVFLSKNTIRKFHPITNGVNLAREFTTFGEEIPKTYGGKGDVLADSGRTVTLQDDKAPETKPEENGNASQAPEAEPASGNPAQTDATNGPAKDDAPKNDKPAVPTDTKTDAPADAPANTLADAPADSRPN.

The disordered stretch occupies residues 1-107; it reads MEKVQEQPAQ…KPQEPADTRP (107 aa). The segment covering 7–16 has biased composition (polar residues); it reads QPAQTLSETA. The span at 39 to 59 shows a compositional bias: basic and acidic residues; sequence DSKEAETEKPAEVAPKEDSKE. The region spanning 196–371 is the CRAL-TRIO domain; it reads FKGLGYITTY…TYGGKGDVLA (176 aa). Tyr221, Arg241, His275, Tyr277, and Lys311 together coordinate heme. The disordered stretch occupies residues 378–457; sequence TLQDDKAPET…ADAPADSRPN (80 aa). 2 stretches are compositionally biased toward basic and acidic residues: residues 380–391 and 418–427; these read QDDKAPETKPEE and AKDDAPKNDK. Low complexity predominate over residues 428-457; it reads PAVPTDTKTDAPADAPANTLADAPADSRPN.

Belongs to the SFH5 family. It depends on heme b as a cofactor.

Its subcellular location is the cytoplasm. It localises to the endoplasmic reticulum membrane. The protein localises to the microsome membrane. The catalysed reaction is a 1,2-diacyl-sn-glycero-3-phospho-(1D-myo-inositol)(in) = a 1,2-diacyl-sn-glycero-3-phospho-(1D-myo-inositol)(out). Its function is as follows. Non-classical phosphatidylinositol (PtdIns) transfer protein (PITP), which exhibits PtdIns-binding/transfer activity in the absence of detectable PtdCho-binding/transfer activity. Regulates PtdIns(4,5)P2 homeostasis at the plasma membrane. Heme-binding protein that may play a role in organic oxidant-induced stress responses. The chain is Phosphatidylinositol transfer protein SFH5 (SFH5) from Coccidioides immitis (strain RS) (Valley fever fungus).